We begin with the raw amino-acid sequence, 557 residues long: Formate--tetrahydrofolate ligase 2 (557 aa).

ATP is bound at residue 66–73; the sequence is TPAGEGKT.

Belongs to the formate--tetrahydrofolate ligase family.

The catalysed reaction is (6S)-5,6,7,8-tetrahydrofolate + formate + ATP = (6R)-10-formyltetrahydrofolate + ADP + phosphate. The protein operates within one-carbon metabolism; tetrahydrofolate interconversion. This chain is Formate--tetrahydrofolate ligase 2, found in Streptococcus pyogenes serotype M5 (strain Manfredo).